A 59-amino-acid polypeptide reads, in one-letter code: Small ribosomal subunit protein bS21 (59 aa).

Residues 35–59 (REHYEKPSVKKKKKSEAAKRKKRNF) are disordered. A compositionally biased stretch (basic residues) spans 43–59 (VKKKKKSEAAKRKKRNF).

This sequence belongs to the bacterial ribosomal protein bS21 family.

This chain is Small ribosomal subunit protein bS21, found in Finegoldia magna (strain ATCC 29328 / DSM 20472 / WAL 2508) (Peptostreptococcus magnus).